The following is a 145-amino-acid chain: Mannitol-specific phosphotransferase enzyme IIA component (145 aa).

The region spanning 4–143 is the PTS EIIA type-2 domain; that stretch reads TILSTETIKV…QEVLAFLGEV (140 aa). His64 acts as the Tele-phosphohistidine intermediate in catalysis. His64 carries the post-translational modification Phosphohistidine; by HPr.

It localises to the cytoplasm. Its function is as follows. The phosphoenolpyruvate-dependent sugar phosphotransferase system (sugar PTS), a major carbohydrate active transport system, catalyzes the phosphorylation of incoming sugar substrates concomitantly with their translocation across the cell membrane. The enzyme II CmtAB PTS system is involved in D-mannitol transport. The protein is Mannitol-specific phosphotransferase enzyme IIA component (mtlF) of Halalkalibacterium halodurans (strain ATCC BAA-125 / DSM 18197 / FERM 7344 / JCM 9153 / C-125) (Bacillus halodurans).